The primary structure comprises 406 residues: Dematin (406 aa).

Disordered stretches follow at residues 1–30 (MERLQKQPLTSPGSVSSSRDSSVPGSPSSI) and 78–333 (LPRS…DRGN). Low complexity predominate over residues 11–29 (SPGSVSSSRDSSVPGSPSS). A phosphoserine mark is found at serine 16, serine 18, serine 26, serine 92, serine 96, serine 105, serine 110, serine 113, serine 157, and serine 227. Over residues 105–114 (SPGTISQASA) the composition is skewed to polar residues. Positions 217–228 (EEEEEEEDDDSG) are enriched in acidic residues. An interaction with RASGRF2 region spans residues 225-309 (DDSGEEMKAL…SRLQSTDFSP (85 aa)). Composition is skewed to basic and acidic residues over residues 229–243 (EEMKALRERQREELS) and 253–262 (ILKEEMEKSL). A phosphoserine mark is found at serine 270, serine 280, serine 290, serine 304, serine 316, serine 334, serine 373, and serine 384. Positions 282–323 (HAGTSKSSSLPAYGRTTLSRLQSTDFSPSGSEAESPGLQNGE) are enriched in polar residues. In terms of domain architecture, HP spans 338 to 406 (VLEQKIYPYE…NELKKKASLF (69 aa)). Serine 404 carries the post-translational modification Phosphoserine; by PKA.

The protein belongs to the villin/gelsolin family. In terms of assembly, monomeric; under reducing conditions. Self-associates. Exists under oxidizing condition as a trimer linked by disulfide bonds. Found in a complex with DMTN, F-actin and spectrin. Found in a complex with ADD2, DMTN and SLC2A1. Interacts with F-actin, ITPKB and spectrin. Interacts with SLC2A1 (via C-terminus cytoplasmic region). Interacts with RASGRF2. Post-translationally, phosphorylated. Phosphorylation at Ser-404 by PKA causes the C-terminal headpiece domain to associate with the N-terminal core domain, and leads to the inhibition of its actin bundling activity.

It is found in the cytoplasm. It localises to the cytosol. The protein localises to the perinuclear region. The protein resides in the cytoskeleton. Its subcellular location is the cell membrane. It is found in the membrane. It localises to the endomembrane system. The protein localises to the cell projection. Functionally, membrane-cytoskeleton-associated protein with F-actin-binding activity that induces F-actin bundles formation and stabilization. Its F-actin-bundling activity is reversibly regulated upon its phosphorylation by the cAMP-dependent protein kinase A (PKA). Binds to the erythrocyte membrane glucose transporter-1 SLC2A1/GLUT1, and hence stabilizes and attaches the spectrin-actin network to the erythrocytic plasma membrane. Plays a role in maintaining the functional integrity of PKA-activated erythrocyte shape and the membrane mechanical properties. Also plays a role as a modulator of actin dynamics in fibroblasts; acts as a negative regulator of the RhoA activation pathway. In platelets, functions as a regulator of internal calcium mobilization across the dense tubular system that affects platelet granule secretion pathways and aggregation. Also required for the formation of a diverse set of cell protrusions, such as filopodia and lamellipodia, necessary for platelet cell spreading, motility and migration. Acts as a tumor suppressor and inhibits malignant cell transformation. In Bos taurus (Bovine), this protein is Dematin (DMTN).